Here is a 620-residue protein sequence, read N- to C-terminus: Zinc metalloproteinase-disintegrin-like ACLD (620 aa).

The signal sequence occupies residues M1–S20. Positions I21–P189 are excised as a propeptide. Positions K199 to P395 constitute a Peptidase M12B domain. E202 contacts Ca(2+). N259 and N265 each carry an N-linked (GlcNAc...) asparagine glycan. Ca(2+) is bound at residue D286. 3 cysteine pairs are disulfide-bonded: C310–C390, C350–C374, and C352–C357. H335 serves as a coordination point for Zn(2+). E336 is an active-site residue. Zn(2+)-binding residues include H339 and H345. N-linked (GlcNAc...) asparagine glycosylation is present at N373. Ca(2+)-binding residues include C390 and N393. An N-linked (GlcNAc...) asparagine glycan is attached at N396. One can recognise a Disintegrin domain in the interval P403–N489. Positions 405, 408, 410, 412, 415, and 418 each coordinate Ca(2+). 14 disulfide bridges follow: C406–C435, C417–C430, C419–C425, C429–C452, C443–C449, C448–C474, C461–C481, C468–C500, C493–C505, C512–C562, C527–C573, C540–C550, C557–C599, and C593–C604. The D/ECD-tripeptide signature appears at D467–D469. 2 N-linked (GlcNAc...) asparagine glycosylation sites follow: N502 and N536.

It belongs to the venom metalloproteinase (M12B) family. P-III subfamily. P-IIIa sub-subfamily. In terms of assembly, monomer. It depends on Zn(2+) as a cofactor. In terms of tissue distribution, expressed by the venom gland.

It is found in the secreted. With respect to regulation, inhibited by EDTA and O-phenanthroline. Not inhibited by PMSF, benzamidine, irreversible serine-proteinase inhibitors and cysteine proteinase inhibitor E-64. Functionally, is a potent activator of prothrombin (F2). Does not elicit any hemorrhagic response. Barely inhibits collagen-induced platelet aggregation. Binds neither collagen, nor the jararhagin-monoclonal antibody MAJar3. Hydrolyzes the Aalpha-chain of fibrin and fibrinogen, without affecting the Bbeta- and gamma-chains. Is capable of triggering endothelial pro-inflammatory and procoagulant cell responses, but fails to trigger apoptosis. Induces von Willebrand factor release, and the expression of both ICAM1 and E-selectin (SELE) (without increase in VCAM1) in endothelial cells (HUVEC). Is also able to up-regulate the synthesis of the coagulation factor TF (F3). Enhances nitric oxide (NO) generation, prostacyclin production and interleukin-8 release. The protein is Zinc metalloproteinase-disintegrin-like ACLD of Agkistrodon contortrix laticinctus (Broad-banded copperhead).